Consider the following 352-residue polypeptide: Isoflavone-7-O-methyltransferase 6 (352 aa).

118-127 contributes to the substrate binding site; it reads VLDPTLSGSY. S-adenosyl-L-methionine contacts are provided by Gly196, Asp219, Asp239, Met240, and Lys253. The active-site Proton acceptor is the His257.

The protein belongs to the class I-like SAM-binding methyltransferase superfamily. Cation-independent O-methyltransferase family. COMT subfamily. In terms of assembly, homodimer.

The enzyme catalyses a 7-hydroxyisoflavone + S-adenosyl-L-methionine = a 7-methoxyisoflavone + S-adenosyl-L-homocysteine + H(+). The protein operates within phytoalexin biosynthesis; medicarpin biosynthesis. Functionally, transfers a methyl group to 7-hydroxyls of the isoflavones daidzein, genistein and 6,7,4'-trihydroxyisoflavone. Can also methylate (+)6a-hydroxymaackiain with lower efficiency. The protein is Isoflavone-7-O-methyltransferase 6 of Medicago sativa (Alfalfa).